Consider the following 417-residue polypeptide: NADH-quinone oxidoreductase subunit D (417 aa).

It belongs to the complex I 49 kDa subunit family. As to quaternary structure, NDH-1 is composed of 14 different subunits. Subunits NuoB, C, D, E, F, and G constitute the peripheral sector of the complex.

The protein localises to the cell inner membrane. The enzyme catalyses a quinone + NADH + 5 H(+)(in) = a quinol + NAD(+) + 4 H(+)(out). NDH-1 shuttles electrons from NADH, via FMN and iron-sulfur (Fe-S) centers, to quinones in the respiratory chain. The immediate electron acceptor for the enzyme in this species is believed to be ubiquinone. Couples the redox reaction to proton translocation (for every two electrons transferred, four hydrogen ions are translocated across the cytoplasmic membrane), and thus conserves the redox energy in a proton gradient. This Coxiella burnetii (strain CbuG_Q212) (Coxiella burnetii (strain Q212)) protein is NADH-quinone oxidoreductase subunit D.